Consider the following 547-residue polypeptide: MIFLEFAELCSRLEKISGRLETISILAETISSLSDDDLPHFCRLILGKPFPEWSGKKLGVGPNLLYEAVAYVTGRKREEVIDRLSRVGDAGAAVEELLSQKSQTSFFTVELTLADIMAALIEISGMEGGRSQKEKVRVIQRILSSASPLEGHYITAILLEDFRIGVGEGNLRDAIAQAFSVDPNLVEYANQVRNDMGEVAVLARKGEEALRSVRLVPFHPVRMMLARQGTISGVLKEGDPVAVEFKYDGARFQFHKQNKTCRMYSRRLEEVTNAMPDVVALLDEALPDDIIVDGEVIAVQGGHPMPFQTVLRRFRRKHNVAEAADAITMIPNLFDILYYNQEMLIDLPFRERRNILTQVASRYVTPQLVSDDETEIEAYYHTALDAGHEGVMLKLQGSRYTPGVRGKDWVKIKPEADTLDLVVTGAEWGEGKRAHVFGSFLLSVRDDDRLVPISRVATGFSDEQLIWLFDTLQDDIIRKDGKMVYFEPRLVFEIGYSEIQKSPNYEGGYALRFPRFIEVREDKDLKEANTAEDVEERYIQTHSSLNT.

ATP is bound at residue E244. K246 (N6-AMP-lysine intermediate) is an active-site residue. Positions 251, 266, 295, 334, 405, and 411 each coordinate ATP.

Belongs to the ATP-dependent DNA ligase family. It depends on Mg(2+) as a cofactor.

The catalysed reaction is ATP + (deoxyribonucleotide)n-3'-hydroxyl + 5'-phospho-(deoxyribonucleotide)m = (deoxyribonucleotide)n+m + AMP + diphosphate.. In terms of biological role, DNA ligase that seals nicks in double-stranded DNA during DNA replication, DNA recombination and DNA repair. The sequence is that of DNA ligase from Methanospirillum hungatei JF-1 (strain ATCC 27890 / DSM 864 / NBRC 100397 / JF-1).